Consider the following 884-residue polypeptide: Valine--tRNA ligase (884 aa).

Residues 46–56 (PNVTGKLHLGH) carry the 'HIGH' region motif. The 'KMSKS' region signature appears at 520–524 (KMSKS). Residue lysine 523 participates in ATP binding. Residues 809–844 (LADLLNVEEELARLEKELAKWQKELNMVGKKLSNER) are a coiled coil.

Belongs to the class-I aminoacyl-tRNA synthetase family. ValS type 1 subfamily. Monomer.

Its subcellular location is the cytoplasm. It carries out the reaction tRNA(Val) + L-valine + ATP = L-valyl-tRNA(Val) + AMP + diphosphate. Its function is as follows. Catalyzes the attachment of valine to tRNA(Val). As ValRS can inadvertently accommodate and process structurally similar amino acids such as threonine, to avoid such errors, it has a 'posttransfer' editing activity that hydrolyzes mischarged Thr-tRNA(Val) in a tRNA-dependent manner. The protein is Valine--tRNA ligase of Streptococcus agalactiae serotype Ia (strain ATCC 27591 / A909 / CDC SS700).